Here is a 306-residue protein sequence, read N- to C-terminus: MPKVTKEKKSRIHNDVQKQGIVFNKDFGQHILKNPLVITTMLEKAALRATDVVLEIGPGTGNMTVRMLERAKKVIACEIDTRLAAELQKRVQATPLQPKLQVLIGDFLKAELPFFDLCIANVPYQISSPLIFKLLLHRPLFRCAVLMFQREFAERLVAKPGDKLYCRLSINTQLLARVDMLMKVGKNNFRPPPKVESSVVRLEPKNPPPPVNFTEWDGLTRIAFLRKNKTLAATFKVTSVLEMLEKNYKLYRSLRNEPIEDDFKMQDKVISILEEQDMAAKRARSMDIDDFMRLLLAFNSAGIHFN.

The S-adenosyl-L-methionine site is built by His30, Leu32, Gly57, Glu78, Asp106, and Asn121.

The protein belongs to the class I-like SAM-binding methyltransferase superfamily. rRNA adenine N(6)-methyltransferase family. In terms of assembly, part of the small subunit (SSU) processome, composed of more than 70 proteins and the RNA chaperone small nucleolar RNA (snoRNA) U3.

Its subcellular location is the nucleus. It is found in the nucleolus. The catalysed reaction is adenosine(1779)/adenosine(1780) in 18S rRNA + 4 S-adenosyl-L-methionine = N(6)-dimethyladenosine(1779)/N(6)-dimethyladenosine(1780) in 18S rRNA + 4 S-adenosyl-L-homocysteine + 4 H(+). Specifically dimethylates two adjacent adenosines in the loop of a conserved hairpin near the 3'-end of 18S rRNA in the 40S particle. Involved in the pre-rRNA processing steps leading to small-subunit rRNA production independently of its RNA-modifying catalytic activity. Part of the small subunit (SSU) processome, first precursor of the small eukaryotic ribosomal subunit. During the assembly of the SSU processome in the nucleolus, many ribosome biogenesis factors, an RNA chaperone and ribosomal proteins associate with the nascent pre-rRNA and work in concert to generate RNA folding, modifications, rearrangements and cleavage as well as targeted degradation of pre-ribosomal RNA by the RNA exosome. This chain is Probable dimethyladenosine transferase, found in Drosophila melanogaster (Fruit fly).